We begin with the raw amino-acid sequence, 191 residues long: Protein GrpE (191 aa).

A compositionally biased stretch (basic and acidic residues) spans 1–10 (MNHEEQKVEA). Residues 1–28 (MNHEEQKVEAMEQVEAQPVEPTDVDSEV) form a disordered region.

This sequence belongs to the GrpE family. In terms of assembly, homodimer.

It localises to the cytoplasm. Functionally, participates actively in the response to hyperosmotic and heat shock by preventing the aggregation of stress-denatured proteins, in association with DnaK and GrpE. It is the nucleotide exchange factor for DnaK and may function as a thermosensor. Unfolded proteins bind initially to DnaJ; upon interaction with the DnaJ-bound protein, DnaK hydrolyzes its bound ATP, resulting in the formation of a stable complex. GrpE releases ADP from DnaK; ATP binding to DnaK triggers the release of the substrate protein, thus completing the reaction cycle. Several rounds of ATP-dependent interactions between DnaJ, DnaK and GrpE are required for fully efficient folding. The protein is Protein GrpE of Aeromonas hydrophila subsp. hydrophila (strain ATCC 7966 / DSM 30187 / BCRC 13018 / CCUG 14551 / JCM 1027 / KCTC 2358 / NCIMB 9240 / NCTC 8049).